The chain runs to 320 residues: Lipoyl synthase (320 aa).

[4Fe-4S] cluster is bound by residues Cys-67, Cys-72, Cys-78, Cys-93, Cys-97, Cys-100, and Ser-307. In terms of domain architecture, Radical SAM core spans 79–296; sequence FNHGTATFMI…RDKANEMGFE (218 aa).

It belongs to the radical SAM superfamily. Lipoyl synthase family. The cofactor is [4Fe-4S] cluster.

Its subcellular location is the cytoplasm. The catalysed reaction is [[Fe-S] cluster scaffold protein carrying a second [4Fe-4S](2+) cluster] + N(6)-octanoyl-L-lysyl-[protein] + 2 oxidized [2Fe-2S]-[ferredoxin] + 2 S-adenosyl-L-methionine + 4 H(+) = [[Fe-S] cluster scaffold protein] + N(6)-[(R)-dihydrolipoyl]-L-lysyl-[protein] + 4 Fe(3+) + 2 hydrogen sulfide + 2 5'-deoxyadenosine + 2 L-methionine + 2 reduced [2Fe-2S]-[ferredoxin]. It participates in protein modification; protein lipoylation via endogenous pathway; protein N(6)-(lipoyl)lysine from octanoyl-[acyl-carrier-protein]: step 2/2. Catalyzes the radical-mediated insertion of two sulfur atoms into the C-6 and C-8 positions of the octanoyl moiety bound to the lipoyl domains of lipoate-dependent enzymes, thereby converting the octanoylated domains into lipoylated derivatives. The chain is Lipoyl synthase from Haemophilus influenzae (strain PittEE).